The sequence spans 307 residues: Transmembrane and coiled-coil domain-containing protein 5B (307 aa).

Positions 17-207 (FASSLEAVKQ…LEKQISKAQD (191 aa)) form a coiled coil. The helical transmembrane segment at 243–265 (YFQYLTFMVLVFIRLLAYVIFHL) threads the bilayer.

This sequence belongs to the TMCO5 family.

It localises to the membrane. The sequence is that of Transmembrane and coiled-coil domain-containing protein 5B (TMCO5B) from Homo sapiens (Human).